The following is a 56-amino-acid chain: Large ribosomal subunit protein bL33 (56 aa).

It belongs to the bacterial ribosomal protein bL33 family.

The polypeptide is Large ribosomal subunit protein bL33 (Rickettsia africae (strain ESF-5)).